The following is a 409-amino-acid chain: Arginine deiminase (409 aa).

Cys399 acts as the Amidino-cysteine intermediate in catalysis.

Belongs to the arginine deiminase family.

It is found in the cytoplasm. The enzyme catalyses L-arginine + H2O = L-citrulline + NH4(+). It functions in the pathway amino-acid degradation; L-arginine degradation via ADI pathway; carbamoyl phosphate from L-arginine: step 1/2. The protein is Arginine deiminase of Borrelia recurrentis (strain A1).